The sequence spans 162 residues: ATP synthase subunit b (162 aa).

A helical transmembrane segment spans residues 6 to 26 (PDIGLLFWMLLSFGIVFFVAA).

Belongs to the ATPase B chain family. As to quaternary structure, F-type ATPases have 2 components, F(1) - the catalytic core - and F(0) - the membrane proton channel. F(1) has five subunits: alpha(3), beta(3), gamma(1), delta(1), epsilon(1). F(0) has three main subunits: a(1), b(2) and c(10-14). The alpha and beta chains form an alternating ring which encloses part of the gamma chain. F(1) is attached to F(0) by a central stalk formed by the gamma and epsilon chains, while a peripheral stalk is formed by the delta and b chains.

Its subcellular location is the cell inner membrane. Functionally, f(1)F(0) ATP synthase produces ATP from ADP in the presence of a proton or sodium gradient. F-type ATPases consist of two structural domains, F(1) containing the extramembraneous catalytic core and F(0) containing the membrane proton channel, linked together by a central stalk and a peripheral stalk. During catalysis, ATP synthesis in the catalytic domain of F(1) is coupled via a rotary mechanism of the central stalk subunits to proton translocation. Its function is as follows. Component of the F(0) channel, it forms part of the peripheral stalk, linking F(1) to F(0). This is ATP synthase subunit b from Azobacteroides pseudotrichonymphae genomovar. CFP2.